A 307-amino-acid chain; its full sequence is Transcription initiation factor IIB 5 (307 aa).

A TFIIB-type zinc finger spans residues 19–47 (TTEPCPECGGPVRTNSAETVCADCGLIID). Residues Cys-23, Cys-26, Cys-39, and Cys-42 each contribute to the Zn(2+) site. Basic and acidic residues-rich tracts occupy residues 54 to 66 (GPEW…DTAK) and 107 to 121 (MRRE…STKE). The disordered stretch occupies residues 54 to 121 (GPEWHRDDAD…SRGRWRSTKE (68 aa)). 2 consecutive repeat copies span residues 129 to 212 (TEIR…NEEL) and 223 to 304 (QFVP…RLLS).

Belongs to the TFIIB family.

Functionally, stabilizes TBP binding to an archaeal box-A promoter. Also responsible for recruiting RNA polymerase II to the pre-initiation complex (DNA-TBP-TFIIB). In Halobacterium salinarum (strain ATCC 700922 / JCM 11081 / NRC-1) (Halobacterium halobium), this protein is Transcription initiation factor IIB 5.